The following is a 219-amino-acid chain: Large ribosomal subunit protein bL25 (219 aa).

Residues 194 to 219 (SSTELEETPEVPASAVPTTDQGESAE) form a disordered region. Residues 209 to 219 (VPTTDQGESAE) show a composition bias toward polar residues.

This sequence belongs to the bacterial ribosomal protein bL25 family. CTC subfamily. In terms of assembly, part of the 50S ribosomal subunit; part of the 5S rRNA/L5/L18/L25 subcomplex. Contacts the 5S rRNA. Binds to the 5S rRNA independently of L5 and L18.

In terms of biological role, this is one of the proteins that binds to the 5S RNA in the ribosome where it forms part of the central protuberance. The polypeptide is Large ribosomal subunit protein bL25 (Legionella pneumophila (strain Paris)).